We begin with the raw amino-acid sequence, 331 residues long: GATA transcription factor 12 (331 aa).

Disordered stretches follow at residues 30-49 (ENDV…SSNF) and 105-138 (SGFK…SVPA). Low complexity predominate over residues 34 to 47 (VADSTTTTTITDSS). Over residues 116 to 134 (DTGSPENPNSSSPIFTTDV) the composition is skewed to polar residues. The Nuclear localization signal signature appears at 139 to 146 (KARSKRSR). Residues 174–218 (SSQQHLSPPTSPPLLMAPLGKKQAVDGGHRRKKDVSSPESGGAEE) form a disordered region. The GATA-type zinc finger occupies 215-269 (GAEERRCLHCATDKTPQWRTGPMGPKTLCNACGVRYKSGRLVPEYRPAASPTFVL).

It belongs to the type IV zinc-finger family. Class A subfamily. As to expression, expressed in the vascular cylinder of roots. Expressed in the differentiation zone of the root stele.

It localises to the nucleus. Transcriptional activator that specifically binds 5'-GATA-3' or 5'-GAT-3' motifs within gene promoters. May be involved in the regulation of some light-responsive genes. Transcription activator involved in xylem formation. Functions upstream of NAC030/VND7, a master switch of xylem vessel differentiation. The sequence is that of GATA transcription factor 12 from Arabidopsis thaliana (Mouse-ear cress).